The following is a 180-amino-acid chain: Negative modulator of initiation of replication (180 aa).

3 interaction with DNA regions span residues 86–87, 115–119, and 149–155; these read AV, RTRVY, and NTNTGRK.

The protein belongs to the SeqA family. In terms of assembly, homodimer. Polymerizes to form helical filaments.

It is found in the cytoplasm. Its function is as follows. Negative regulator of replication initiation, which contributes to regulation of DNA replication and ensures that replication initiation occurs exactly once per chromosome per cell cycle. Binds to pairs of hemimethylated GATC sequences in the oriC region, thus preventing assembly of replication proteins and re-initiation at newly replicated origins. Repression is relieved when the region becomes fully methylated. This is Negative modulator of initiation of replication from Salmonella typhimurium (strain LT2 / SGSC1412 / ATCC 700720).